The primary structure comprises 354 residues: Serum paraoxonase/lactonase 3 (354 aa).

N29 is a glycosylation site (N-linked (GlcNAc...) asparagine). A disulfide bond links C42 and C352. Residues E53 and D54 each contribute to the Ca(2+) site. H114 serves as the catalytic Proton acceptor. Residue I116 coordinates Ca(2+). S165 bears the Phosphoserine mark. Positions 167, 168, 223, 268, and 269 each coordinate Ca(2+). N-linked (GlcNAc...) asparagine glycosylation is found at N269 and N323.

It belongs to the paraoxonase family. In terms of assembly, homodimer. The cofactor is Ca(2+). The signal sequence is not cleaved.

Its subcellular location is the secreted. The protein localises to the extracellular space. The catalysed reaction is a phenyl acetate + H2O = a phenol + acetate + H(+). It carries out the reaction An aryl dialkyl phosphate + H2O = dialkyl phosphate + an aryl alcohol.. It catalyses the reaction an N-acyl-L-homoserine lactone + H2O = an N-acyl-L-homoserine + H(+). Its function is as follows. Has low activity towards the organophosphate paraxon and aromatic carboxylic acid esters. Rapidly hydrolyzes lactones such as statin prodrugs (e.g. lovastatin). Hydrolyzes aromatic lactones and 5- or 6-member ring lactones with aliphatic substituents but not simple lactones or those with polar substituents. This Homo sapiens (Human) protein is Serum paraoxonase/lactonase 3 (PON3).